The sequence spans 226 residues: UPF0173 metal-dependent hydrolase GFO_2312 (226 aa).

Belongs to the UPF0173 family.

The protein is UPF0173 metal-dependent hydrolase GFO_2312 of Christiangramia forsetii (strain DSM 17595 / CGMCC 1.15422 / KT0803) (Gramella forsetii).